A 1463-amino-acid chain; its full sequence is Probable oxidoreductase PXDNL (1463 aa).

Residues 1–23 (MEPRLFCWTTLFLLAGWCLPGLP) form the signal peptide. Residues 24–50 (CPSRCLCFKSTVRCMHLMLDHIPQVPQ) enclose the LRRNT domain. LRR repeat units follow at residues 51 to 72 (QTTV…AFKK), 75 to 96 (NLNT…AFEG), 99 to 120 (NLLY…TFKG), 123 to 144 (SLEH…TFGD), and 147 to 168 (RLER…SFSN). Residues 180 to 233 (NALVCDCDLMWLGELLQGFAQHGHTQAAATCEYPRRLHGRAVASVTVEEFNCQS) form the LRRCT domain. Ig-like C2-type domains follow at residues 234–322 (PRIT…AMLR), 330–414 (PSFV…ANII), 419–504 (PQFT…VQLT), and 507–596 (PKAL…MFLT). 5 disulfides stabilise this stretch: Cys-255–Cys-305, Cys-351–Cys-398, Cys-440–Cys-488, Cys-532–Cys-580, and Cys-718–Cys-734. A glycan (N-linked (GlcNAc...) asparagine) is linked at Asn-387. His-812 acts as the Proton acceptor in catalysis. Asp-813 contacts Ca(2+). Disulfide bonds link Cys-832–Cys-842 and Cys-836–Cys-859. Thr-891, Tyr-893, Asp-895, and Ser-897 together coordinate Ca(2+). Cys-944 and Cys-953 form a disulfide bridge. Position 1057 (His-1057) interacts with heme b. 2 disulfides stabilise this stretch: Cys-1160–Cys-1217 and Cys-1258–Cys-1284. Residues 1393 to 1451 (AGCTDVRGVPRKAEERWMKEDCTHCICESGQVTCVVEICPPAPCPSPELVKGTCCPVCR) enclose the VWFC domain.

Belongs to the peroxidase family. XPO subfamily. Interacts with PXDN; this interaction inhibits the peroxidase activity of PXDN. Requires heme b as cofactor. Post-translationally, phosphorylation by SRC on tyrosine residues is required for targeting to polysomes. In terms of tissue distribution, the 57 kDa isoform PMR1 is the only form detected at protein levels in human cell lines. Expressed in heart.

It is found in the secreted. The protein resides in the endoplasmic reticulum. It localises to the cell membrane. The protein localises to the cytoplasm. Its function is as follows. Probable oxidoreductase. Lacks peroxidase activity. Inhibits the peroxidase activity of PXDN through its interaction. In terms of biological role, endonuclease selectively degrading some target mRNAs while they are engaged by translating ribosomes, among which albumin and beta-globin mRNAs. This Homo sapiens (Human) protein is Probable oxidoreductase PXDNL.